Consider the following 369-residue polypeptide: NAD-dependent epimerase/dehydratase FUM13 (369 aa).

Tyr-176 contacts NADP(+).

This sequence belongs to the NAD(P)-dependent epimerase/dehydratase family. Dihydroflavonol-4-reductase subfamily.

It participates in mycotoxin biosynthesis. Functionally, NAD-dependent epimerase/dehydratase; part of the gene cluster that mediates the biosynthesis of fumonisins B1 (FB1), B2 (FB2), B3 (FB3), and B4 (FB4), which are carcinogenic mycotoxins. Within the pathway, FUM13 stereospecifically reduces the intermediate 3-keto intermediate 2-amino-3-oxo-12,16-dimethylicosane to the 3-hydroxyl product 2-amino-3-hydroxy-12,16-dimethylicosane. The biosynthesis starts with the FUM1-catalyzed carbon chain assembly from one molecule of acetyl-CoA, eight molecules of malonyl-CoA, and two molecules of methionine (in S-adenosyl form). The C18 polyketide chain is released from the enzyme by a nucleophilic attack of a carbanion, which is derived from R-carbon of alanine by decarboxylation, on the carbonyl carbon of polyketide acyl chain. This step is catalyzed by the pyridoxal 5'-phosphate-dependent aminoacyl transferase FUM8. The resultant 3-keto intermediate is then stereospecifically reduced to a 3-hydroxyl product by reductase FUM13. Subsequent oxidations at C-10 by the cytochrome P450 monooxygenase FUM2, C-14 and C-15 by FUM6, FUM12 or FUM15, tricarballylic esterification of the hydroxyl groups on C-14 and C-15 by acyltransferase FUM14, and C-5 hydroxylation by 2-keto-glutarate-dependent dioxygenase FUM3 furnish the biosynthesis of fumonisins. The tricarballylic moieties are most likely derived from the citric acid cycle, and their addition to the carbon backbone may involve FUM7, FUM10, FUM11 and FUM14. The chain is NAD-dependent epimerase/dehydratase FUM13 from Gibberella moniliformis (strain M3125 / FGSC 7600) (Maize ear and stalk rot fungus).